The primary structure comprises 174 residues: ATP-dependent protease subunit HslV (174 aa).

T2 is an active-site residue. Positions 157, 160, and 163 each coordinate Na(+).

Belongs to the peptidase T1B family. HslV subfamily. In terms of assembly, a double ring-shaped homohexamer of HslV is capped on each side by a ring-shaped HslU homohexamer. The assembly of the HslU/HslV complex is dependent on binding of ATP.

It is found in the cytoplasm. The catalysed reaction is ATP-dependent cleavage of peptide bonds with broad specificity.. Allosterically activated by HslU binding. Protease subunit of a proteasome-like degradation complex believed to be a general protein degrading machinery. This Shewanella frigidimarina (strain NCIMB 400) protein is ATP-dependent protease subunit HslV.